Reading from the N-terminus, the 911-residue chain is Alpha-actinin-4 (911 aa).

Residues 1–269 (MVDYHAANQS…YVSSFYHAFS (269 aa)) form an actin-binding region. An interaction with VCL region spans residues 12-26 (QYGPSSAGNGAGGGG). Residue Y31 is modified to Phosphotyrosine. The tract at residues 40 to 61 (RDLLLDPAWEKQQRKTFTAWCN) is interaction with VCL. Calponin-homology (CH) domains follow at residues 50-154 (KQQR…LRFA) and 163-269 (TSAK…HAFS). Residues 84–88 (LMLLL) carry the LXXLL motif motif. Residues 108–126 (KINNVNKALDFIASKGVKL) are interaction with VCL. Residue K114 is modified to N6-acetyllysine. The tract at residues 177 to 192 (TAPYKNVNVQNFHISW) is polyphosphoinositide (PIP2)-binding. K214 carries the post-translational modification N6-acetyllysine. Position 249 is a phosphothreonine (T249). Spectrin repeat units follow at residues 293–403 (HLME…WLLN), 413–518 (HLAE…ALEK), 528–639 (QLHL…ALLE), and 649–752 (HLRR…EVEN). Residues K592 and K625 each carry the N6-acetyllysine modification. Phosphoserine is present on S696. The interval 736–911 (WEQLLTTIAR…STALYGESDL (176 aa)) is mediates interaction with MICALL2. EF-hand domains lie at 765 to 800 (EQMQEFRASFNHFDKDHGGALGPEEFKACLISLGYD) and 806 to 841 (QGEAEFNRIMSLVDPNHSGLVTFQAFIDFMSRETTD). A Ca(2+)-binding site is contributed by D778. K779 carries the post-translational modification N6-acetyllysine. 2 residues coordinate Ca(2+): D780 and E789. K859 carries the post-translational modification N6-acetyllysine. The residue at position 909 (S909) is a Phosphoserine.

It belongs to the alpha-actinin family. As to quaternary structure, homodimer; antiparallel. Binds TRIM3 at the N-terminus. Interacts with MICALL2 (preferentially in opened conformation); stimulated by RAB13 activation. Identified in a complex with CASK, IQGAP1, MAGI2, NPHS1, SPTAN1 and SPTBN1. Identified in a IGF2BP1-dependent mRNP granule complex containing untranslated mRNAs. Component of the CART complex, at least composed of ACTN4, HGS/HRS, MYO5B and TRIM3. Interacts with MAGI1. Interacts with PDLIM2. Interacts with PPARG and RARA. Binds to VCL; this interaction triggers VCL conformational changes. Interacts with SEPTIN14. Interacts with IGSF8. As to expression, widely expressed.

It localises to the nucleus. The protein resides in the cytoplasm. Its subcellular location is the cell junction. It is found in the cytoskeleton. The protein localises to the stress fiber. It localises to the perinuclear region. F-actin cross-linking protein which is thought to anchor actin to a variety of intracellular structures. This is a bundling protein. Probably involved in vesicular trafficking via its association with the CART complex. The CART complex is necessary for efficient transferrin receptor recycling but not for EGFR degradation. Involved in tight junction assembly in epithelial cells probably through interaction with MICALL2. Links MICALL2 to the actin cytoskeleton and recruits it to the tight junctions. May also function as a transcriptional coactivator, stimulating transcription mediated by the nuclear hormone receptors PPARG and RARA. Association with IGSF8 regulates the immune synapse formation and is required for efficient T-cell activation. This chain is Alpha-actinin-4, found in Homo sapiens (Human).